Reading from the N-terminus, the 519-residue chain is Histidine ammonia-lyase (519 aa).

A cross-link (5-imidazolinone (Ala-Gly)) is located at residues A146–G148. A 2,3-didehydroalanine (Ser) modification is found at S147.

This sequence belongs to the PAL/histidase family. In terms of processing, contains an active site 4-methylidene-imidazol-5-one (MIO), which is formed autocatalytically by cyclization and dehydration of residues Ala-Ser-Gly.

The protein localises to the cytoplasm. The catalysed reaction is L-histidine = trans-urocanate + NH4(+). The protein operates within amino-acid degradation; L-histidine degradation into L-glutamate; N-formimidoyl-L-glutamate from L-histidine: step 1/3. This Bradyrhizobium diazoefficiens (strain JCM 10833 / BCRC 13528 / IAM 13628 / NBRC 14792 / USDA 110) protein is Histidine ammonia-lyase.